The chain runs to 267 residues: tRNA pseudouridine synthase A (267 aa).

The Nucleophile role is filled by Asp55. Tyr111 contacts substrate.

Belongs to the tRNA pseudouridine synthase TruA family.

The enzyme catalyses uridine(38/39/40) in tRNA = pseudouridine(38/39/40) in tRNA. In terms of biological role, formation of pseudouridine at positions 38, 39 and 40 in the anticodon stem and loop of transfer RNAs. This chain is tRNA pseudouridine synthase A, found in Thermococcus gammatolerans (strain DSM 15229 / JCM 11827 / EJ3).